The following is a 429-amino-acid chain: Enolase (429 aa).

Glutamine 163 is a binding site for (2R)-2-phosphoglycerate. The Proton donor role is filled by glutamate 205. Positions 242, 285, and 312 each coordinate Mg(2+). (2R)-2-phosphoglycerate is bound by residues lysine 337, arginine 366, serine 367, and lysine 388. The active-site Proton acceptor is the lysine 337.

It belongs to the enolase family. It depends on Mg(2+) as a cofactor.

Its subcellular location is the cytoplasm. The protein localises to the secreted. The protein resides in the cell surface. It carries out the reaction (2R)-2-phosphoglycerate = phosphoenolpyruvate + H2O. The protein operates within carbohydrate degradation; glycolysis; pyruvate from D-glyceraldehyde 3-phosphate: step 4/5. In terms of biological role, catalyzes the reversible conversion of 2-phosphoglycerate (2-PG) into phosphoenolpyruvate (PEP). It is essential for the degradation of carbohydrates via glycolysis. The sequence is that of Enolase from Aromatoleum aromaticum (strain DSM 19018 / LMG 30748 / EbN1) (Azoarcus sp. (strain EbN1)).